The following is a 611-amino-acid chain: MAYSDYSDGADDMPDFHDEGEFDDYLNDDEYDLMNEVFPTLKAQLQDYQGWDNLSLKLALFDNNFDLESTLAELKKTLKKKKTPKKPIAAANGSANVTQKLANISISQQRPNDRLPDWLDEEESEGERNGEEANDEKTVQRYYKTTVPTKPKKPHDISAFVKSALPHLSFVVLGHVDAGKSTLMGRLLYDLNIVNQSQLRKLQRESETMGKSSFKFAWIMDQTNEERERGVTVSICTSHFSTHRANFTIVDAPGHRDFVPNAIMGISQADMAILCVDCSTNAFESGFDLDGQTKEHMLLASSLGIHNLIIAMNKMDNVDWSQQRFEEIKSKLLPYLVDIGFFEDNINWVPISGFSGEGVYKIEYTDEVRQWYNGPNLMSTLENAAFKISKENEGINKDDPFLFSVLEIIPSKKTSNDLALVSGKLESGSIQPGESLTIYPSEQSCIVDKIQVGSQQGQSTNHEETDVAIKGDFVTLKLRKAYPEDIQNGDLAASVDYSSIHSAQCFVLELTTFDMNRPLLPGTPFILFIGVKEQPARIKRLISFIDKGNTASKKKIRHLGSKQRAFVEIELIEVKRWIPLLTAHENDRLGRVVLRKDGRTIAAGKISEITQ.

Disordered regions lie at residues 1-21 and 105-138; these read MAYSDYSDGADDMPDFHDEGE and SISQQRPNDRLPDWLDEEESEGERNGEEANDEKT. Ser-124 carries the phosphoserine modification. Basic and acidic residues predominate over residues 126 to 138; that stretch reads GERNGEEANDEKT. One can recognise a tr-type G domain in the interval 165-390; sequence LPHLSFVVLG…LENAAFKISK (226 aa). The tract at residues 174–181 is G1; it reads GHVDAGKS. Residue 174–181 coordinates GTP; it reads GHVDAGKS. The G2 stretch occupies residues 230 to 234; the sequence is GVTVS. The G3 stretch occupies residues 251–254; it reads DAPG. Residues 313-316 and 352-354 contribute to the GTP site; these read NKMD and SGF. The interval 313–316 is G4; that stretch reads NKMD. The G5 stretch occupies residues 352 to 354; that stretch reads SGF.

Belongs to the TRAFAC class translation factor GTPase superfamily. Classic translation factor GTPase family. Component of the Dom34-Hbs1 complex, also named Pelota-HBS1L complex, composed of DOM34 and HBS1.

It localises to the cytoplasm. The enzyme catalyses GTP + H2O = GDP + phosphate + H(+). GTPase component of the Dom34-Hbs1 complex, a complex that recognizes stalled ribosomes and triggers the No-Go Decay (NGD) pathway. The Dom34-Hbs1 complex recognizes ribosomes stalled at the 3' end of an mRNA and engages stalled ribosomes by destabilizing mRNA in the mRNA channel. Following ribosome-binding, the Pelota-HBS1L complex promotes the disassembly of stalled ribosomes, followed by degradation of damaged mRNAs as part of the NGD pathway. The Dom34-Hbs1 complex is also involved in non-functional rRNA decay. This is Elongation factor 1 alpha-like protein from Saccharomyces cerevisiae (strain ATCC 204508 / S288c) (Baker's yeast).